We begin with the raw amino-acid sequence, 1141 residues long: Sterol regulatory element-binding protein 2 (1141 aa).

Positions 1–50 (MDDSGELGGLETMETLTELGDELTLGDIDEMLQFVSNQVGEFPDLFSEQL) are transcriptional activation (acidic). Residues 1-479 (MDDSGELGGL…PPVALGMVDR (479 aa)) are Cytoplasmic-facing. Residues 48–144 (EQLCSSFPGS…PQPQPQPQTQ (97 aa)) form a disordered region. Over residues 63-82 (SSGSSGSSSSSSNGRGSSSG) the composition is skewed to low complexity. Positions 88–97 (VQRSFTQVTL) are enriched in polar residues. Low complexity predominate over residues 98–110 (PSFSPSAASPQAP). The segment covering 114–126 (VKVSPTSVPTTPR) has biased composition (polar residues). Residues 237–491 (QQVPVLVQPQ…ILLCVLTFLC (255 aa)) are interaction with LMNA. The region spanning 330 to 380 (ERRTTHNIIEKRYRSSINDKIIELKDLVMGTDAKMHKSGVLRKAIDYIKYL) is the bHLH domain. The tract at residues 380–401 (LQQVNHKLRQENMVLKLANQKN) is leucine-zipper. A Glycyl lysine isopeptide (Lys-Gly) (interchain with G-Cter in SUMO2) cross-link involves residue Lys-464. A helical transmembrane segment spans residues 480–500 (SRILLCVLTFLCLSFNPLTSL). The Lumenal segment spans residues 501 to 533 (LQWGGAHDSDQHPHSGSGRSVLSFESGSGGWFD). Residues 534–554 (WMMPTLLLWLVNGVIVLSVFV) traverse the membrane as a helical segment. The Cytoplasmic portion of the chain corresponds to 555–1139 (KLLVHGEPVI…VKLGGGTAIA (585 aa)). Ser-855 and Ser-1098 each carry phosphoserine.

It belongs to the SREBP family. Forms a tight complex with SCAP, the SCAP-SREBP complex, in the endoplasmic reticulum membrane and the Golgi apparatus. Interacts with PAQR3; the interaction anchors the SCAP-SREBP complex to the Golgi apparatus in low cholesterol conditions. Interacts (via C-terminal domain) with RNF139. In terms of assembly, homodimer; efficient DNA binding of the soluble transcription factor fragment requires dimerization with another bHLH protein. Interacts with LMNA. Processed in the Golgi apparatus, releasing the protein from the membrane. At low cholesterol the SCAP-SREBP complex is recruited into COPII vesicles for export from the endoplasmic reticulum. In the Golgi, complex SREBPs are cleaved sequentially by site-1 (MBTPS1, S1P) and site-2 (MBTPS2, S2P) protease. The first cleavage by site-1 protease occurs within the luminal loop, the second cleavage by site-2 protease occurs within the first transmembrane domain, releasing the transcription factor from the Golgi membrane. Apoptosis triggers cleavage by the cysteine proteases caspase-3 and caspase-7. Cleavage and activation is induced by mediated cholesterol efflux. In terms of processing, phosphorylated by AMPK, leading to suppress protein processing and nuclear translocation, and repress target gene expression. Post-translationally, SCAP-free SREBF2 is ubiquitinated by the BCR(ARMC5) complex, leading to its degradation. Ubiquitinated; the nuclear form has a rapid turnover and is rapidly ubiquitinated and degraded by the proteasome in the nucleus. In terms of tissue distribution, ubiquitously expressed in adult and fetal tissues.

It is found in the endoplasmic reticulum membrane. The protein localises to the golgi apparatus membrane. The protein resides in the cytoplasmic vesicle. It localises to the COPII-coated vesicle membrane. Its subcellular location is the nucleus. Its activity is regulated as follows. Activation by cleavage is down-regulated upon activation of SIRT3-dependent PRKAA1/AMPK-alpha signaling cascade which leads to inhibition of ATP-consuming lipogenesis to restore cellular energy balance. In terms of biological role, precursor of the transcription factor form (Processed sterol regulatory element-binding protein 2), which is embedded in the endoplasmic reticulum membrane. Low sterol concentrations promote processing of this form, releasing the transcription factor form that translocates into the nucleus and activates transcription of genes involved in cholesterol biosynthesis. Key transcription factor that regulates expression of genes involved in cholesterol biosynthesis. Binds to the sterol regulatory element 1 (SRE-1) (5'-ATCACCCCAC-3'). Has dual sequence specificity binding to both an E-box motif (5'-ATCACGTGA-3') and to SRE-1 (5'-ATCACCCCAC-3'). Regulates transcription of genes related to cholesterol synthesis pathway. This Homo sapiens (Human) protein is Sterol regulatory element-binding protein 2.